The primary structure comprises 336 residues: Glyceraldehyde-3-phosphate dehydrogenase (336 aa).

NAD(+) is bound by residues 12-13 (RI), Asp34, and Arg79. D-glyceraldehyde 3-phosphate-binding positions include 150–152 (SCT), Thr181, 210–211 (TG), and Arg233. Catalysis depends on Cys151, which acts as the Nucleophile. Asn315 contacts NAD(+).

Belongs to the glyceraldehyde-3-phosphate dehydrogenase family. Homotetramer.

It localises to the cytoplasm. It catalyses the reaction D-glyceraldehyde 3-phosphate + phosphate + NAD(+) = (2R)-3-phospho-glyceroyl phosphate + NADH + H(+). Its pathway is carbohydrate degradation; glycolysis; pyruvate from D-glyceraldehyde 3-phosphate: step 1/5. Its function is as follows. Involved in osmoadaptation. In Emericella nidulans (strain FGSC A4 / ATCC 38163 / CBS 112.46 / NRRL 194 / M139) (Aspergillus nidulans), this protein is Glyceraldehyde-3-phosphate dehydrogenase (gpdA).